We begin with the raw amino-acid sequence, 393 residues long: METFLYTSESVNEGHPDKLCDQISDAVLDACLEQDPDSKVACETCTKTNMVMVFGEITTKANVDYEKIVRNTCRNIGFVSDDVGLDADNCKVLVNIEQQSPDIAQGVHGHLTKRPEEIGAGDQGHMFGYATDETPELMPLSHVLATKLGARLTEVRKNGTCPWLRPDGKTQVTVEYYNDKGAMVPIRVHTVLISTQHDETVTNDEIAADLKEHVIKPVIPEKYLDEKTIFHLNPSGRFVIGGPHGDAGLTGRKIIIDTYGGWGAHGGGAFSGKDPTKVDRSGAYIVRQAAKSIVANGLARRCLVQVSYAIGVPEPLSVFVDSYGTGKIPDKEILKIVKENFDFRPGMISIHLDLKRGGNGRFLKTAAYGHFGREDPDFTWETVKPLKWEKPQA.

Glu-9 lines the Mg(2+) pocket. His-15 provides a ligand contact to ATP. Residue Asp-17 coordinates Mg(2+). A K(+)-binding site is contributed by Glu-43. L-methionine contacts are provided by Glu-56 and Gln-99. ATP is bound by residues Asp-167–Lys-169, Ser-235–Phe-238, Asp-246, Arg-252–Lys-253, Ala-269, Lys-273, and Lys-277. L-methionine is bound at residue Asp-246. Residue Lys-277 participates in L-methionine binding.

Belongs to the AdoMet synthase family. In terms of assembly, homotetramer; dimer of dimers. Mn(2+) serves as cofactor. The cofactor is Mg(2+). Requires Co(2+) as cofactor. It depends on K(+) as a cofactor.

The protein localises to the cytoplasm. The enzyme catalyses L-methionine + ATP + H2O = S-adenosyl-L-methionine + phosphate + diphosphate. Its pathway is amino-acid biosynthesis; S-adenosyl-L-methionine biosynthesis; S-adenosyl-L-methionine from L-methionine: step 1/1. With respect to regulation, increased activity in the presence of 25 percent acetonitrile, methanol or dimethylformamide. Functionally, catalyzes the formation of S-adenosylmethionine from methionine and ATP. This Acacia koa (Koa tree) protein is S-adenosylmethionine synthase.